Here is a 311-residue protein sequence, read N- to C-terminus: Urease accessory protein UreD (311 aa).

Belongs to the UreD family. UreD, UreF and UreG form a complex that acts as a GTP-hydrolysis-dependent molecular chaperone, activating the urease apoprotein by helping to assemble the nickel containing metallocenter of UreC. The UreE protein probably delivers the nickel.

The protein localises to the cytoplasm. In terms of biological role, required for maturation of urease via the functional incorporation of the urease nickel metallocenter. This Synechococcus sp. (strain CC9902) protein is Urease accessory protein UreD.